A 253-amino-acid chain; its full sequence is MRTPIIAGNWKMNKTVQEAKDFVNTLPTLPDSKEVESVICAPAIQLDALTTAVKEGKAQGLEIGAQNTYFEDNGAFTGETSPVALADLGVKYVVIGHSERRELFHETDEEINKKAHAIFKHGMTPIICVGETDEERESGKANDVVGEQVKKAVAGLSEDQLKSVVIAYEPIWAIGTGKSSTSEDANEMCAFVRQTIADLSSKEVSEATRIQYGGSVKPNNIKEYMAQTDIDGALVGGASLKVEDFVQLLEGAK.

9–11 serves as a coordination point for substrate; sequence NWK. His97 (electrophile) is an active-site residue. Glu169 serves as the catalytic Proton acceptor. Substrate-binding positions include Gly175, Ser215, and 236–237; that span reads GG.

It belongs to the triosephosphate isomerase family. Homodimer.

Its subcellular location is the cytoplasm. The catalysed reaction is D-glyceraldehyde 3-phosphate = dihydroxyacetone phosphate. The protein operates within carbohydrate biosynthesis; gluconeogenesis. It functions in the pathway carbohydrate degradation; glycolysis; D-glyceraldehyde 3-phosphate from glycerone phosphate: step 1/1. In terms of biological role, involved in the gluconeogenesis. Catalyzes stereospecifically the conversion of dihydroxyacetone phosphate (DHAP) to D-glyceraldehyde-3-phosphate (G3P). This is Triosephosphate isomerase from Staphylococcus aureus (strain NCTC 8325 / PS 47).